The chain runs to 230 residues: Urease accessory protein UreF (230 aa).

It belongs to the UreF family. In terms of assembly, ureD, UreF and UreG form a complex that acts as a GTP-hydrolysis-dependent molecular chaperone, activating the urease apoprotein by helping to assemble the nickel containing metallocenter of UreC. The UreE protein probably delivers the nickel.

The protein resides in the cytoplasm. Functionally, required for maturation of urease via the functional incorporation of the urease nickel metallocenter. In Cupriavidus taiwanensis (strain DSM 17343 / BCRC 17206 / CCUG 44338 / CIP 107171 / LMG 19424 / R1) (Ralstonia taiwanensis (strain LMG 19424)), this protein is Urease accessory protein UreF.